The following is a 188-amino-acid chain: Phosphoribosylglycinamide formyltransferase (188 aa).

A N(1)-(5-phospho-beta-D-ribosyl)glycinamide-binding site is contributed by 12–14 (GSN). (6R)-10-formyltetrahydrofolate-binding positions include K66, 91-94 (MRLI), and N108. H110 (proton donor) is an active-site residue.

Belongs to the GART family.

It carries out the reaction N(1)-(5-phospho-beta-D-ribosyl)glycinamide + (6R)-10-formyltetrahydrofolate = N(2)-formyl-N(1)-(5-phospho-beta-D-ribosyl)glycinamide + (6S)-5,6,7,8-tetrahydrofolate + H(+). The protein operates within purine metabolism; IMP biosynthesis via de novo pathway; N(2)-formyl-N(1)-(5-phospho-D-ribosyl)glycinamide from N(1)-(5-phospho-D-ribosyl)glycinamide (10-formyl THF route): step 1/1. In terms of biological role, catalyzes the transfer of a formyl group from 10-formyltetrahydrofolate to 5-phospho-ribosyl-glycinamide (GAR), producing 5-phospho-ribosyl-N-formylglycinamide (FGAR) and tetrahydrofolate. The chain is Phosphoribosylglycinamide formyltransferase from Staphylococcus aureus (strain COL).